The chain runs to 207 residues: Large ribosomal subunit protein uL4 (207 aa).

The interval 48 to 78 is disordered; that stretch reads THKVKTRSEVRGGGRKPWRQKGTGRARQGSI. The span at 60–71 shows a compositional bias: basic residues; that stretch reads GGRKPWRQKGTG.

The protein belongs to the universal ribosomal protein uL4 family. Part of the 50S ribosomal subunit.

Functionally, one of the primary rRNA binding proteins, this protein initially binds near the 5'-end of the 23S rRNA. It is important during the early stages of 50S assembly. It makes multiple contacts with different domains of the 23S rRNA in the assembled 50S subunit and ribosome. Forms part of the polypeptide exit tunnel. This is Large ribosomal subunit protein uL4 from Bacillus pumilus (strain SAFR-032).